A 442-amino-acid polypeptide reads, in one-letter code: tRNA modification GTPase MnmE (442 aa).

3 residues coordinate (6S)-5-formyl-5,6,7,8-tetrahydrofolate: arginine 21, glutamate 79, and lysine 118. Residues 214 to 367 form the TrmE-type G domain; it reads GFKIAIVGKP…LKEELQNYLN (154 aa). Residue asparagine 224 coordinates K(+). GTP is bound by residues 224-229, 243-249, and 268-271; these read NVGKSS, SDIAGTT, and DTAG. Residue serine 228 coordinates Mg(2+). K(+) contacts are provided by serine 243, isoleucine 245, and threonine 248. Threonine 249 is a Mg(2+) binding site. Lysine 442 lines the (6S)-5-formyl-5,6,7,8-tetrahydrofolate pocket.

It belongs to the TRAFAC class TrmE-Era-EngA-EngB-Septin-like GTPase superfamily. TrmE GTPase family. In terms of assembly, homodimer. Heterotetramer of two MnmE and two MnmG subunits. K(+) is required as a cofactor.

Its subcellular location is the cytoplasm. In terms of biological role, exhibits a very high intrinsic GTPase hydrolysis rate. Involved in the addition of a carboxymethylaminomethyl (cmnm) group at the wobble position (U34) of certain tRNAs, forming tRNA-cmnm(5)s(2)U34. This Campylobacter jejuni subsp. jejuni serotype O:23/36 (strain 81-176) protein is tRNA modification GTPase MnmE.